Reading from the N-terminus, the 554-residue chain is Glutamine--tRNA ligase (554 aa).

The short motif at 34-44 (PEPNGYLHIGH) is the 'HIGH' region element. Residues 35–37 (EPN) and 41–47 (HIGHAKS) each bind ATP. L-glutamine contacts are provided by Asp-67 and Tyr-212. Residues Thr-231, 261–262 (RL), and 269–271 (MSK) contribute to the ATP site. A 'KMSKS' region motif is present at residues 268 to 272 (VMSKR). The segment at 317–324 (TKQDNTIE) is interaction with tRNA.

This sequence belongs to the class-I aminoacyl-tRNA synthetase family. In terms of assembly, monomer.

The protein localises to the cytoplasm. The enzyme catalyses tRNA(Gln) + L-glutamine + ATP = L-glutaminyl-tRNA(Gln) + AMP + diphosphate. This is Glutamine--tRNA ligase from Shigella dysenteriae serotype 1 (strain Sd197).